The chain runs to 255 residues: uncharacterized protein (255 aa).

8 residues coordinate NADP(+): Ile-13, Arg-37, Asp-55, Asn-81, Tyr-148, Lys-152, Val-180, and Thr-182. Tyr-148 functions as the Proton donor in the catalytic mechanism. The Lowers pKa of active site Tyr role is filled by Lys-152.

It belongs to the short-chain dehydrogenases/reductases (SDR) family.

Functionally, involved in osmoadaptation. This is an uncharacterized protein from Emericella nidulans (strain FGSC A4 / ATCC 38163 / CBS 112.46 / NRRL 194 / M139) (Aspergillus nidulans).